Here is a 415-residue protein sequence, read N- to C-terminus: Casein kinase 1-like protein 3 (415 aa).

Residues 9-277 enclose the Protein kinase domain; it reads YKLGRKIGGG…FLKRLFRDLF (269 aa). Residues 15-23 and Lys38 contribute to the ATP site; that span reads IGGGSFGEI. The active-site Proton acceptor is Asp128. Composition is skewed to polar residues over residues 303–314 and 373–415; these read NQSQAVPGSSNP and NMPS…SPEK. Disordered stretches follow at residues 303–330 and 344–415; these read NQSQAVPGSSNPRAMPVDTSNHRGGPNI and NAIG…SPEK.

This sequence belongs to the protein kinase superfamily. CK1 Ser/Thr protein kinase family. Casein kinase I subfamily. In terms of processing, slightly autophosphorylated. Expressed in seedlings, stems, leaves and flowers.

The protein resides in the cytoplasm. The protein localises to the nucleus. It carries out the reaction L-seryl-[protein] + ATP = O-phospho-L-seryl-[protein] + ADP + H(+). The enzyme catalyses L-threonyl-[protein] + ATP = O-phospho-L-threonyl-[protein] + ADP + H(+). In terms of biological role, protein kinase involved in blue light responses (e.g. hypocotyl elongation and flowering) by phosphorylating CRY2 to reduce its stability. In Arabidopsis thaliana (Mouse-ear cress), this protein is Casein kinase 1-like protein 3.